The chain runs to 142 residues: Baculoviral IAP repeat-containing protein 5 (142 aa).

A BIR repeat occupies 18–88 (RVSTFKNWPF…KHSSGCAFLS (71 aa)). Ser-20 is subject to Phosphoserine; by AURKC. Position 23 is an N6-acetyllysine (Lys-23). A Phosphothreonine; by CDK1 and CDK15 modification is found at Thr-34. Residue Thr-48 is modified to Phosphothreonine. Residues Cys-57, Cys-60, His-77, and Cys-84 each coordinate Zn(2+). Residues Lys-90, Lys-110, Lys-112, and Lys-115 each carry the N6-acetyllysine modification. Phosphothreonine; by AURKB is present on Thr-117. An N6-acetyllysine modification is found at Lys-129.

The protein belongs to the IAP family. In terms of assembly, monomer or homodimer. Exists as a homodimer in the apo state and as a monomer in the CPC-bound state. The monomer protects cells against apoptosis more efficiently than the dimer. Only the dimeric form is capable of enhancing tubulin stability in cells. When phosphorylated, interacts with LAMTOR5/HBXIP; the resulting complex binds pro-CASP9, as well as active CASP9, but much less efficiently. Component of the chromosomal passenger complex (CPC) composed of at least BIRC5/survivin, CDCA8/borealin, INCENP, AURKB or AURKC; in the complex forms a triple-helix bundle-based subcomplex with INCENP and CDCA8. Interacts with JTB. Interacts (via BIR domain) with histone H3 phosphorylated at 'Thr-3' (H3pT3). Interacts with EVI5. Interacts with GTP-bound RAN in both the S and M phases of the cell cycle. Interacts with USP9X. Interacts with tubulin. Interacts with BIRC2/c-IAP1. The acetylated form at Lys-129 interacts with STAT3. The monomeric form deacetylated at Lys-129 interacts with XPO1/CRM1. The monomeric form interacts with XIAP/BIRC4. Both the dimeric and monomeric form can interact with DIABLO/SMAC. Interacts with BIRC6/bruce. Interacts with FBXL7; this interaction facilitates the polyubiquitination and subsequent proteasomal degradation of BIRC5 by the SCF(FBXL7) E3 ubiquitin-protein ligase complex. Ubiquitinated by the Cul9-RING ubiquitin-protein ligase complex, leading to its degradation. Ubiquitination is required for centrosomal targeting. Deubiquitinated by USP35 or USP38; leading to stabilization. Post-translationally, acetylation at Lys-129 results in its homodimerization, while deacetylation promotes the formation of monomers which heterodimerize with XPO1/CRM1 which facilitates its nuclear export. The acetylated form represses STAT3 transactivation. The dynamic equilibrium between its acetylation and deacetylation at Lys-129 determines its interaction with XPO1/CRM1, its subsequent subcellular localization, and its ability to inhibit STAT3 transactivation. In terms of processing, in vitro phosphorylation at Thr-117 by AURKB prevents interaction with INCENP and localization to mitotic chromosomes. Phosphorylation at Thr-48 by CK2 is critical for its mitotic and anti-apoptotic activities. Phosphorylation at Thr-34 by CDK15 is critical for its anti-apoptotic activity. Phosphorylation at Ser-20 by AURKC is critical for regulation of proper chromosome alignment and segregation, and possibly cytokinesis.

The protein resides in the cytoplasm. The protein localises to the nucleus. Its subcellular location is the chromosome. It is found in the centromere. It localises to the cytoskeleton. The protein resides in the spindle. The protein localises to the kinetochore. Its subcellular location is the midbody. Functionally, multitasking protein that has dual roles in promoting cell proliferation and preventing apoptosis. Component of a chromosome passage protein complex (CPC) which is essential for chromosome alignment and segregation during mitosis and cytokinesis. Acts as an important regulator of the localization of this complex; directs CPC movement to different locations from the inner centromere during prometaphase to midbody during cytokinesis and participates in the organization of the center spindle by associating with polymerized microtubules. Involved in the recruitment of CPC to centromeres during early mitosis via association with histone H3 phosphorylated at 'Thr-3' (H3pT3) during mitosis. The complex with RAN plays a role in mitotic spindle formation by serving as a physical scaffold to help deliver the RAN effector molecule TPX2 to microtubules. May counteract a default induction of apoptosis in G2/M phase. The acetylated form represses STAT3 transactivation of target gene promoters. May play a role in neoplasia. Inhibitor of CASP3 and CASP7. Essential for the maintenance of mitochondrial integrity and function. The polypeptide is Baculoviral IAP repeat-containing protein 5 (BIRC5) (Bos taurus (Bovine)).